Consider the following 90-residue polypeptide: Small ribosomal subunit protein uS15 (90 aa).

The protein belongs to the universal ribosomal protein uS15 family. In terms of assembly, part of the 30S ribosomal subunit. Forms a bridge to the 50S subunit in the 70S ribosome, contacting the 23S rRNA.

Its function is as follows. One of the primary rRNA binding proteins, it binds directly to 16S rRNA where it helps nucleate assembly of the platform of the 30S subunit by binding and bridging several RNA helices of the 16S rRNA. In terms of biological role, forms an intersubunit bridge (bridge B4) with the 23S rRNA of the 50S subunit in the ribosome. The chain is Small ribosomal subunit protein uS15 from Herpetosiphon aurantiacus (strain ATCC 23779 / DSM 785 / 114-95).